Reading from the N-terminus, the 21-residue chain is Natriuretic peptide TsNP (21 aa).

Residues C5 and C21 are joined by a disulfide bond.

Expressed by the venom gland.

The protein localises to the secreted. Functionally, scorpion venom natriuretic peptide that increases the perfusion pressure, glomerular filtration rate and urinary flow in the isolated perfused rat kidney assay. Induces a decrease of the percentages of renal transport for sodium, potassium and chloride and an increase of the urinary cGMP concentration. Also down-regulates the mRNA expression of natriuretic peptide receptor 1 (NPR1) in the kidneys whereas it up-regulates those of NPR2, NPR3 and guanylyl cyclase C (GUCY2C) mRNAs. May exhibit hypotensive and vasodepressor activities. The chain is Natriuretic peptide TsNP from Tityus serrulatus (Brazilian scorpion).